The chain runs to 254 residues: Imidazole glycerol phosphate synthase subunit HisF (254 aa).

Active-site residues include D12 and D131.

Belongs to the HisA/HisF family. As to quaternary structure, heterodimer of HisH and HisF.

The protein localises to the cytoplasm. The catalysed reaction is 5-[(5-phospho-1-deoxy-D-ribulos-1-ylimino)methylamino]-1-(5-phospho-beta-D-ribosyl)imidazole-4-carboxamide + L-glutamine = D-erythro-1-(imidazol-4-yl)glycerol 3-phosphate + 5-amino-1-(5-phospho-beta-D-ribosyl)imidazole-4-carboxamide + L-glutamate + H(+). It functions in the pathway amino-acid biosynthesis; L-histidine biosynthesis; L-histidine from 5-phospho-alpha-D-ribose 1-diphosphate: step 5/9. Functionally, IGPS catalyzes the conversion of PRFAR and glutamine to IGP, AICAR and glutamate. The HisF subunit catalyzes the cyclization activity that produces IGP and AICAR from PRFAR using the ammonia provided by the HisH subunit. The protein is Imidazole glycerol phosphate synthase subunit HisF of Leifsonia xyli subsp. xyli (strain CTCB07).